The following is a 201-amino-acid chain: Mediator of RNA polymerase II transcription subunit 19 (201 aa).

The segment at 166–201 (GTGKSNAKKRKNRSNGSSMATPNSEMQDDVKRRRLE) is disordered.

This sequence belongs to the Mediator complex subunit 19 family. As to quaternary structure, component of the Mediator complex.

The protein resides in the nucleus. Its function is as follows. Component of the Mediator complex, a coactivator involved in the regulated transcription of nearly all RNA polymerase II-dependent genes. Mediator functions as a bridge to convey information from gene-specific regulatory proteins to the basal RNA polymerase II transcription machinery. Mediator is recruited to promoters by direct interactions with regulatory proteins and serves as a scaffold for the assembly of a functional preinitiation complex with RNA polymerase II and the general transcription factors. This Candida glabrata (strain ATCC 2001 / BCRC 20586 / JCM 3761 / NBRC 0622 / NRRL Y-65 / CBS 138) (Yeast) protein is Mediator of RNA polymerase II transcription subunit 19 (ROX3).